We begin with the raw amino-acid sequence, 802 residues long: Lon protease (802 aa).

Positions 17-209 (LPILPLNNVV…QVLSFLERER (193 aa)) constitute a Lon N-terminal domain. ATP is bound at residue 363–370 (GPPGVGKT). One can recognise a Lon proteolytic domain in the interval 599–780 (EDEVGVVTGL…DEVLPRVLHP (182 aa)). Catalysis depends on residues Ser686 and Lys729.

Belongs to the peptidase S16 family. As to quaternary structure, homohexamer. Organized in a ring with a central cavity.

The protein resides in the cytoplasm. It catalyses the reaction Hydrolysis of proteins in presence of ATP.. Its function is as follows. ATP-dependent serine protease that mediates the selective degradation of mutant and abnormal proteins as well as certain short-lived regulatory proteins. Required for cellular homeostasis and for survival from DNA damage and developmental changes induced by stress. Degrades polypeptides processively to yield small peptide fragments that are 5 to 10 amino acids long. Binds to DNA in a double-stranded, site-specific manner. This Roseiflexus castenholzii (strain DSM 13941 / HLO8) protein is Lon protease.